Reading from the N-terminus, the 453-residue chain is Bifunctional protein GlmU (453 aa).

A pyrophosphorylase region spans residues 1 to 225 (MNIVILAAGT…EWETLGVNSK (225 aa)). Residues 6–9 (LAAG), Lys20, Gln71, 76–77 (GT), 98–100 (YGD), Gly135, Glu150, Asn165, and Asn223 contribute to the UDP-N-acetyl-alpha-D-glucosamine site. Position 100 (Asp100) interacts with Mg(2+). A Mg(2+)-binding site is contributed by Asn223. The interval 226–246 (AQLAELERIHQRKLAEALLAD) is linker. The segment at 247 to 453 (GVTLADPARI…GYVRPVKKKS (207 aa)) is N-acetyltransferase. Residues Arg329 and Lys347 each contribute to the UDP-N-acetyl-alpha-D-glucosamine site. His359 serves as the catalytic Proton acceptor. Tyr362 and Asn373 together coordinate UDP-N-acetyl-alpha-D-glucosamine. Acetyl-CoA is bound by residues Ala376, 382-383 (NY), Ser401, and Ala419.

This sequence in the N-terminal section; belongs to the N-acetylglucosamine-1-phosphate uridyltransferase family. It in the C-terminal section; belongs to the transferase hexapeptide repeat family. In terms of assembly, homotrimer. Requires Mg(2+) as cofactor.

It localises to the cytoplasm. It catalyses the reaction alpha-D-glucosamine 1-phosphate + acetyl-CoA = N-acetyl-alpha-D-glucosamine 1-phosphate + CoA + H(+). The catalysed reaction is N-acetyl-alpha-D-glucosamine 1-phosphate + UTP + H(+) = UDP-N-acetyl-alpha-D-glucosamine + diphosphate. It functions in the pathway nucleotide-sugar biosynthesis; UDP-N-acetyl-alpha-D-glucosamine biosynthesis; N-acetyl-alpha-D-glucosamine 1-phosphate from alpha-D-glucosamine 6-phosphate (route II): step 2/2. Its pathway is nucleotide-sugar biosynthesis; UDP-N-acetyl-alpha-D-glucosamine biosynthesis; UDP-N-acetyl-alpha-D-glucosamine from N-acetyl-alpha-D-glucosamine 1-phosphate: step 1/1. It participates in bacterial outer membrane biogenesis; LPS lipid A biosynthesis. In terms of biological role, catalyzes the last two sequential reactions in the de novo biosynthetic pathway for UDP-N-acetylglucosamine (UDP-GlcNAc). The C-terminal domain catalyzes the transfer of acetyl group from acetyl coenzyme A to glucosamine-1-phosphate (GlcN-1-P) to produce N-acetylglucosamine-1-phosphate (GlcNAc-1-P), which is converted into UDP-GlcNAc by the transfer of uridine 5-monophosphate (from uridine 5-triphosphate), a reaction catalyzed by the N-terminal domain. This is Bifunctional protein GlmU from Burkholderia thailandensis (strain ATCC 700388 / DSM 13276 / CCUG 48851 / CIP 106301 / E264).